The primary structure comprises 110 residues: NADH-quinone oxidoreductase subunit K (110 aa).

3 helical membrane passes run 13–33 (LNHY…GLFM), 41–61 (ILMS…AFSI), and 73–93 (IIIL…LLIY).

This sequence belongs to the complex I subunit 4L family. NDH-1 is composed of 14 different subunits. Subunits NuoA, H, J, K, L, M, N constitute the membrane sector of the complex.

It is found in the cell inner membrane. The catalysed reaction is a quinone + NADH + 5 H(+)(in) = a quinol + NAD(+) + 4 H(+)(out). In terms of biological role, NDH-1 shuttles electrons from NADH, via FMN and iron-sulfur (Fe-S) centers, to quinones in the respiratory chain. The immediate electron acceptor for the enzyme in this species is believed to be ubiquinone. Couples the redox reaction to proton translocation (for every two electrons transferred, four hydrogen ions are translocated across the cytoplasmic membrane), and thus conserves the redox energy in a proton gradient. The chain is NADH-quinone oxidoreductase subunit K from Rickettsia conorii (strain ATCC VR-613 / Malish 7).